The sequence spans 309 residues: WD repeat domain phosphoinositide-interacting protein 4 (309 aa).

The stretch at 4–42 is one WD 1 repeat; sequence QPLRGVTSLHFNQDQSCFCCAMETGVRIYNVEPLMEKGH. The L/FRRG motif motif lies at 180 to 183; sequence LRRG. Residues 184–223 form a WD 2 repeat; that stretch reads TDPATLYCINFSHDSSFLCASSDKGTVHIFALKDTRLNRR.

It belongs to the WD repeat PROPPIN family. As to quaternary structure, interacts with WIPI1. Interacts with WIPI2. Interacts with ATG2A and ATG2B. Interacts with ULK1. May interact with the PRKAA1, PRKAA2, PRKAB1 and PRKAG1 subunits of the AMPK kinase. May interact with NUDC.

It localises to the preautophagosomal structure. The protein localises to the cytoplasm. Its function is as follows. Component of the autophagy machinery that controls the major intracellular degradation process by which cytoplasmic materials are packaged into autophagosomes and delivered to lysosomes for degradation. Binds phosphatidylinositol 3-phosphate (PtdIns3P). Activated by the STK11/AMPK signaling pathway upon starvation, WDR45 is involved in autophagosome assembly downstream of WIPI2, regulating the size of forming autophagosomes. Together with WIPI1, promotes ATG2 (ATG2A or ATG2B)-mediated lipid transfer by enhancing ATG2-association with phosphatidylinositol 3-monophosphate (PI3P)-containing membranes. Probably recruited to membranes through its PtdIns3P activity. The sequence is that of WD repeat domain phosphoinositide-interacting protein 4 (Wdr45) from Rattus norvegicus (Rat).